A 373-amino-acid chain; its full sequence is CCA-adding enzyme (373 aa).

Residues glycine 8 and arginine 11 each coordinate ATP. Glycine 8 and arginine 11 together coordinate CTP. Residues aspartate 21 and aspartate 23 each coordinate Mg(2+). The ATP site is built by arginine 91, arginine 137, and arginine 140. Arginine 91, arginine 137, and arginine 140 together coordinate CTP.

The protein belongs to the tRNA nucleotidyltransferase/poly(A) polymerase family. Bacterial CCA-adding enzyme type 2 subfamily. Mg(2+) serves as cofactor.

The enzyme catalyses a tRNA precursor + 2 CTP + ATP = a tRNA with a 3' CCA end + 3 diphosphate. The catalysed reaction is a tRNA with a 3' CCA end + 2 CTP + ATP = a tRNA with a 3' CCACCA end + 3 diphosphate. Catalyzes the addition and repair of the essential 3'-terminal CCA sequence in tRNAs without using a nucleic acid template. Adds these three nucleotides in the order of C, C, and A to the tRNA nucleotide-73, using CTP and ATP as substrates and producing inorganic pyrophosphate. tRNA 3'-terminal CCA addition is required both for tRNA processing and repair. Also involved in tRNA surveillance by mediating tandem CCA addition to generate a CCACCA at the 3' terminus of unstable tRNAs. While stable tRNAs receive only 3'-terminal CCA, unstable tRNAs are marked with CCACCA and rapidly degraded. The protein is CCA-adding enzyme of Marinobacter nauticus (strain ATCC 700491 / DSM 11845 / VT8) (Marinobacter aquaeolei).